A 129-amino-acid chain; its full sequence is Lysozyme C-1/C-2 (129 aa).

One can recognise a C-type lysozyme domain in the interval 1–129 (KVFERCELAR…VSSYVEGCTL (129 aa)). 4 cysteine pairs are disulfide-bonded: C6–C127, C30–C115, C65–C81, and C77–C95. Active-site residues include E35 and D53.

The protein belongs to the glycosyl hydrolase 22 family. Monomer.

It carries out the reaction Hydrolysis of (1-&gt;4)-beta-linkages between N-acetylmuramic acid and N-acetyl-D-glucosamine residues in a peptidoglycan and between N-acetyl-D-glucosamine residues in chitodextrins.. Functionally, lysozymes have primarily a bacteriolytic function; those in tissues and body fluids are associated with the monocyte-macrophage system and enhance the activity of immunoagents. This is Lysozyme C-1/C-2 from Axis axis (Axis deer).